Consider the following 165-residue polypeptide: Shikimate kinase (165 aa).

12–17 (GCGKST) is a binding site for ATP. Ser16 provides a ligand contact to Mg(2+). Asp34, Arg57, and Gly79 together coordinate substrate. Residue Arg116 coordinates ATP. Residue Arg133 participates in substrate binding.

This sequence belongs to the shikimate kinase family. In terms of assembly, monomer. Mg(2+) serves as cofactor.

It localises to the cytoplasm. The enzyme catalyses shikimate + ATP = 3-phosphoshikimate + ADP + H(+). The protein operates within metabolic intermediate biosynthesis; chorismate biosynthesis; chorismate from D-erythrose 4-phosphate and phosphoenolpyruvate: step 5/7. In terms of biological role, catalyzes the specific phosphorylation of the 3-hydroxyl group of shikimic acid using ATP as a cosubstrate. The chain is Shikimate kinase from Clostridium botulinum (strain Alaska E43 / Type E3).